A 277-amino-acid polypeptide reads, in one-letter code: Mannosyl-3-phosphoglycerate phosphatase (277 aa).

Asp-13 acts as the Nucleophile in catalysis. Asp-13, Asp-15, and Asp-219 together coordinate Mg(2+).

This sequence belongs to the HAD-like hydrolase superfamily. MPGP family. Mg(2+) serves as cofactor.

It is found in the cytoplasm. The enzyme catalyses 2-O-(alpha-D-mannosyl)-3-phosphoglycerate + H2O = (2R)-2-O-(alpha-D-mannosyl)-glycerate + phosphate. It functions in the pathway carbohydrate biosynthesis; 2-(alpha-D-mannosyl)-D-glycerate biosynthesis; 2-(alpha-D-mannosyl)-D-glycerate from GDP-alpha-D-mannose (MPG route): step 2/2. Hydrolyzes mannosyl-3-phosphoglycerate (MPG) to form the osmolyte mannosylglycerate (MG). The polypeptide is Mannosyl-3-phosphoglycerate phosphatase (Aeropyrum pernix (strain ATCC 700893 / DSM 11879 / JCM 9820 / NBRC 100138 / K1)).